A 240-amino-acid polypeptide reads, in one-letter code: Mediator of RNA polymerase II transcription subunit 19 (240 aa).

Disordered stretches follow at residues 32-58 and 169-240; these read GKTQ…DNSR and QPPK…SGLR. 2 stretches are compositionally biased toward basic residues: residues 170–181 and 212–224; these read PPKKKNKKHKQS and RKKK…KKSR.

It belongs to the Mediator complex subunit 19 family. In terms of assembly, component of the Mediator complex.

It is found in the nucleus. Functionally, component of the Mediator complex, a coactivator involved in the regulated transcription of nearly all RNA polymerase II-dependent genes. Mediator functions as a bridge to convey information from gene-specific regulatory proteins to the basal RNA polymerase II transcription machinery. Mediator is recruited to promoters by direct interactions with regulatory proteins and serves as a scaffold for the assembly of a functional preinitiation complex with RNA polymerase II and the general transcription factors. The polypeptide is Mediator of RNA polymerase II transcription subunit 19 (med19) (Xenopus laevis (African clawed frog)).